The chain runs to 367 residues: Carbohydrate sulfotransferase 14 (367 aa).

At 1–34 (MPPRKKEYGIKRASGSLVHFRAPVSATTIRRHSA) the chain is on the cytoplasmic side. Residues 35–55 (VVPSVLTFAVIVASGGLLLMI) traverse the membrane as a helical; Signal-anchor for type II membrane protein segment. Topologically, residues 56-367 (EKGMLNSVQT…PNTTTEYCRH (312 aa)) are lumenal. An N-linked (GlcNAc...) asparagine glycan is attached at Asn-99. Residues 144–150 (PKVACSN) and 202–210 (REPMARLLS) contribute to the 3'-phosphoadenylyl sulfate site. Asn-359 is a glycosylation site (N-linked (GlcNAc...) asparagine).

The protein belongs to the sulfotransferase 2 family.

It localises to the golgi apparatus membrane. Its function is as follows. Catalyzes the transfer of sulfate to position 4 of the N-acetylgalactosamine (GalNAc) residue of dermatan sulfate. The chain is Carbohydrate sulfotransferase 14 (chst14) from Danio rerio (Zebrafish).